The following is a 342-amino-acid chain: Pre-mRNA-splicing factor 18 (342 aa).

Methionine 1 carries the post-translational modification N-acetylmethionine.

Belongs to the PRP18 family. As to quaternary structure, heterodimer with PPIH. Interacts with PRPF4 and with the spliceosome. Part of a complex containing U4/U6 snRNPs.

It localises to the nucleus speckle. In terms of biological role, participates in the second step of pre-mRNA splicing. This Bos taurus (Bovine) protein is Pre-mRNA-splicing factor 18 (PRPF18).